Reading from the N-terminus, the 79-residue chain is Beta-defensin 15 (79 aa).

The N-terminal stretch at 1–20 is a signal peptide; the sequence is MKTFLFLFAVLFFLDPAKNA. 3 disulfides stabilise this stretch: Cys26–Cys53, Cys33–Cys47, and Cys37–Cys54.

It belongs to the beta-defensin family. Expressed in testis and to a lesser extent in epididymis (caput, corpus and cauda). Also weakly expressed in kidneys and colon.

The protein localises to the secreted. Functionally, has antibacterial activity. This is Beta-defensin 15 (Defb15) from Mus musculus (Mouse).